The sequence spans 353 residues: 2-Hydroxyacid oxidase 2 (353 aa).

The FMN hydroxy acid dehydrogenase domain occupies 2–353; sequence PLVCLTDFRE…NQDLIQFSRL (352 aa). FMN-binding positions include 77 to 79, Ser106, and Gln128; that span reads PTG. Residue Tyr130 coordinates a 2-oxocarboxylate. Thr156 provides a ligand contact to FMN. An a 2-oxocarboxylate-binding site is contributed by Arg165. Lys224 provides a ligand contact to FMN. His248 (proton acceptor) is an active-site residue. Arg251 is a binding site for a 2-oxocarboxylate. Residues 279–283 and 302–303 each bind FMN; these read DGGIR and GR. The short motif at 351 to 353 is the Microbody targeting signal element; that stretch reads SRL.

Belongs to the FMN-dependent alpha-hydroxy acid dehydrogenase family. As to quaternary structure, homotetramer. FMN is required as a cofactor.

The protein resides in the peroxisome. The enzyme catalyses a (2S)-2-hydroxycarboxylate + O2 = a 2-oxocarboxylate + H2O2. It carries out the reaction 2-hydroxyhexadecanoate + O2 = 2-oxohexadecanoate + H2O2. The catalysed reaction is 2-hydroxyoctanoate + O2 = 2-oxooctanoate + H2O2. The protein operates within lipid metabolism; fatty acid metabolism. In terms of biological role, oxidase that catalyzes the oxidation of medium and long chain hydroxyacids such as 2-hydroxyhexadecanoate and 2-hydroxyoctanoate, to the correspondong 2-oxoacids. Its role in the oxidation of 2-hydroxy fatty acids may contribute to the general pathway of fatty acid alpha-oxidation. Active in vitro with the artificial electron acceptor 2,6-dichlorophenolindophenol (DCIP), but O2 is believed to be the physiological electron acceptor, leading to the production of H2O2. In Bos taurus (Bovine), this protein is 2-Hydroxyacid oxidase 2 (HAO2).